Consider the following 898-residue polypeptide: Alanine--tRNA ligase (898 aa).

His-564, His-568, Cys-682, and His-686 together coordinate Zn(2+).

This sequence belongs to the class-II aminoacyl-tRNA synthetase family. Requires Zn(2+) as cofactor.

The protein resides in the cytoplasm. It catalyses the reaction tRNA(Ala) + L-alanine + ATP = L-alanyl-tRNA(Ala) + AMP + diphosphate. Functionally, catalyzes the attachment of alanine to tRNA(Ala) in a two-step reaction: alanine is first activated by ATP to form Ala-AMP and then transferred to the acceptor end of tRNA(Ala). Also edits incorrectly charged Ser-tRNA(Ala) and Gly-tRNA(Ala) via its editing domain. This is Alanine--tRNA ligase from Beijerinckia indica subsp. indica (strain ATCC 9039 / DSM 1715 / NCIMB 8712).